We begin with the raw amino-acid sequence, 732 residues long: 1,4-alpha-glucan branching enzyme GlgB 1 (732 aa).

Aspartate 411 serves as the catalytic Nucleophile. Glutamate 464 acts as the Proton donor in catalysis.

The protein belongs to the glycosyl hydrolase 13 family. GlgB subfamily. In terms of assembly, monomer.

The enzyme catalyses Transfers a segment of a (1-&gt;4)-alpha-D-glucan chain to a primary hydroxy group in a similar glucan chain.. The protein operates within glycan biosynthesis; glycogen biosynthesis. In terms of biological role, catalyzes the formation of the alpha-1,6-glucosidic linkages in glycogen by scission of a 1,4-alpha-linked oligosaccharide from growing alpha-1,4-glucan chains and the subsequent attachment of the oligosaccharide to the alpha-1,6 position. The sequence is that of 1,4-alpha-glucan branching enzyme GlgB 1 from Xanthomonas oryzae pv. oryzae (strain KACC10331 / KXO85).